We begin with the raw amino-acid sequence, 582 residues long: L-fucose isomerase (582 aa).

Catalysis depends on proton acceptor residues Glu333 and Asp357. Residues Glu333, Asp357, and His520 each contribute to the Mn(2+) site.

It belongs to the L-fucose isomerase family. Requires Mn(2+) as cofactor.

Its subcellular location is the cytoplasm. The enzyme catalyses L-fucose = L-fuculose. It participates in carbohydrate degradation; L-fucose degradation; L-lactaldehyde and glycerone phosphate from L-fucose: step 1/3. In terms of biological role, converts the aldose L-fucose into the corresponding ketose L-fuculose. The protein is L-fucose isomerase of Vibrio vulnificus (strain YJ016).